Here is a 238-residue protein sequence, read N- to C-terminus: tRNA1(Val) (adenine(37)-N6)-methyltransferase (238 aa).

Belongs to the methyltransferase superfamily. tRNA (adenine-N(6)-)-methyltransferase family.

It is found in the cytoplasm. It catalyses the reaction adenosine(37) in tRNA1(Val) + S-adenosyl-L-methionine = N(6)-methyladenosine(37) in tRNA1(Val) + S-adenosyl-L-homocysteine + H(+). In terms of biological role, specifically methylates the adenine in position 37 of tRNA(1)(Val) (anticodon cmo5UAC). This chain is tRNA1(Val) (adenine(37)-N6)-methyltransferase, found in Shewanella putrefaciens (strain CN-32 / ATCC BAA-453).